Here is a 203-residue protein sequence, read N- to C-terminus: Outer-membrane lipoprotein carrier protein (203 aa).

The first 21 residues, 1–21 (MKKMAIACALLSSVVASSVWA), serve as a signal peptide directing secretion. Positions 178–203 (QQNGAVDPSKFTFTPPQGVTIDDQRK) are disordered.

Belongs to the LolA family. In terms of assembly, monomer.

It is found in the periplasm. Its function is as follows. Participates in the translocation of lipoproteins from the inner membrane to the outer membrane. Only forms a complex with a lipoprotein if the residue after the N-terminal Cys is not an aspartate (The Asp acts as a targeting signal to indicate that the lipoprotein should stay in the inner membrane). The chain is Outer-membrane lipoprotein carrier protein from Salmonella agona (strain SL483).